A 218-amino-acid chain; its full sequence is Protein-L-isoaspartate O-methyltransferase 1 (218 aa).

S69 is an active-site residue.

This sequence belongs to the methyltransferase superfamily. L-isoaspartyl/D-aspartyl protein methyltransferase family.

The protein resides in the cytoplasm. The catalysed reaction is [protein]-L-isoaspartate + S-adenosyl-L-methionine = [protein]-L-isoaspartate alpha-methyl ester + S-adenosyl-L-homocysteine. Catalyzes the methyl esterification of L-isoaspartyl residues in peptides and proteins that result from spontaneous decomposition of normal L-aspartyl and L-asparaginyl residues. It plays a role in the repair and/or degradation of damaged proteins. The chain is Protein-L-isoaspartate O-methyltransferase 1 from Marinobacter nauticus (strain ATCC 700491 / DSM 11845 / VT8) (Marinobacter aquaeolei).